We begin with the raw amino-acid sequence, 48 residues long: Protein PsbN (48 aa).

A helical membrane pass occupies residues 12-34 (LLIAMVTITFGLTGYGLYTAFGP).

This sequence belongs to the PsbN family.

The protein resides in the cellular thylakoid membrane. Functionally, may play a role in photosystem I and II biogenesis. This Prochlorococcus marinus (strain MIT 9313) protein is Protein PsbN.